A 234-amino-acid chain; its full sequence is Leucyl/phenylalanyl-tRNA--protein transferase (234 aa).

This sequence belongs to the L/F-transferase family.

It is found in the cytoplasm. It carries out the reaction N-terminal L-lysyl-[protein] + L-leucyl-tRNA(Leu) = N-terminal L-leucyl-L-lysyl-[protein] + tRNA(Leu) + H(+). The enzyme catalyses N-terminal L-arginyl-[protein] + L-leucyl-tRNA(Leu) = N-terminal L-leucyl-L-arginyl-[protein] + tRNA(Leu) + H(+). It catalyses the reaction L-phenylalanyl-tRNA(Phe) + an N-terminal L-alpha-aminoacyl-[protein] = an N-terminal L-phenylalanyl-L-alpha-aminoacyl-[protein] + tRNA(Phe). Functions in the N-end rule pathway of protein degradation where it conjugates Leu, Phe and, less efficiently, Met from aminoacyl-tRNAs to the N-termini of proteins containing an N-terminal arginine or lysine. This Citrobacter koseri (strain ATCC BAA-895 / CDC 4225-83 / SGSC4696) protein is Leucyl/phenylalanyl-tRNA--protein transferase.